The sequence spans 106 residues: Large ribosomal subunit protein uL24 (106 aa).

The segment at 1–20 is disordered; that stretch reads MNKRAKSKNREPLRKSPVKR. Residues 8-20 are compositionally biased toward basic and acidic residues; the sequence is KNREPLRKSPVKR.

This sequence belongs to the universal ribosomal protein uL24 family. As to quaternary structure, part of the 50S ribosomal subunit.

One of two assembly initiator proteins, it binds directly to the 5'-end of the 23S rRNA, where it nucleates assembly of the 50S subunit. Functionally, one of the proteins that surrounds the polypeptide exit tunnel on the outside of the subunit. This is Large ribosomal subunit protein uL24 from Methylacidiphilum infernorum (isolate V4) (Methylokorus infernorum (strain V4)).